Consider the following 609-residue polypeptide: Ovochymase-2 (609 aa).

An N-terminal signal peptide occupies residues 1–22 (MPISKDKLILILGMVCLEQGHS). Positions 23–51 (ETLSSIRNPDCGQSLVKPQPQNYFSLFSR) are cleaved as a propeptide — activation peptide. The 248-residue stretch at 52-299 (IVGGSQVEKG…VLPWILKHIQ (248 aa)) folds into the Peptidase S1 domain. A disulfide bridge connects residues cysteine 77 and cysteine 93. Histidine 92 acts as the Charge relay system in catalysis. N-linked (GlcNAc...) asparagine glycosylation occurs at asparagine 104. Residue glutamate 119 participates in Ca(2+) binding. Catalysis depends on aspartate 142, which acts as the Charge relay system. Disulfide bonds link cysteine 176-cysteine 246, cysteine 207-cysteine 225, cysteine 236-cysteine 265, and cysteine 311-cysteine 341. The active-site Charge relay system is serine 240. CUB domains lie at 311 to 421 (CSEP…YKAL) and 431 to 543 (CRSL…ISFI). Asparagine 356 is a glycosylation site (N-linked (GlcNAc...) asparagine). Cysteine 365 and cysteine 384 are disulfide-bonded. Asparagine 415 carries an N-linked (GlcNAc...) asparagine glycan. 2 disulfide bridges follow: cysteine 431–cysteine 458 and cysteine 485–cysteine 506. N-linked (GlcNAc...) asparagine glycans are attached at residues asparagine 530 and asparagine 549. The segment at 580–609 (HTKPPYEEDIGEMPAIDSGLLKQGERRGKH) is disordered.

Belongs to the peptidase S1 family. In terms of tissue distribution, only expressed in uterus tissue. Expressed in the initial segment (IS) of the caput epididymis, the region most proximal to the testis.

It is found in the secreted. Its function is as follows. May be required for sperm ADAM3 processing and consequential sperm fertilizing ability. In vitro, has an endopeptidase activity. This chain is Ovochymase-2, found in Mus musculus (Mouse).